Consider the following 548-residue polypeptide: Synaptic vesicle 2-related protein (548 aa).

At 1 to 87 (MEEDLFQLRQ…GFGKFQWKLS (87 aa)) the chain is on the cytoplasmic side. Phosphoserine is present on residues S25 and S31. Residues 88–108 (VLTGLAWMADAMEMMILSILA) traverse the membrane as a helical segment. Topologically, residues 109–122 (PQLHCEWRLPSWQV) are vesicular. Residues 123–143 (ALLTSVVFVGMMSSSTLWGNI) traverse the membrane as a helical segment. Over 144–156 (SDQYGRKTGLKIS) the chain is Cytoplasmic. The chain crosses the membrane as a helical span at residues 157 to 177 (VLWTLYYGILSAFAPVYSWIL). Topologically, residues 178–180 (VLR) are vesicular. A helical transmembrane segment spans residues 181-201 (GLVGFGIGGVPQSVTLYAEFL). Residues 202–209 (PMKARAKC) are Cytoplasmic-facing. The chain crosses the membrane as a helical span at residues 210-230 (ILLIEVFWAIGTVFEVVLAVF). The Vesicular portion of the chain corresponds to 231–238 (VMPSLGWR). Residues 239–259 (WLLILSAVPLLLFAVLCFWLP) form a helical membrane-spanning segment. At 260–316 (ESARYDVLSGNQEKAIATLKRIATENGAPMPLGKLIISRQEDRGKMRDLFTPHFRWT) the chain is on the cytoplasmic side. The helical transmembrane segment at 317-337 (TLLLWFIWFSNAFSYYGLVLL) threads the bilayer. Residues 338–373 (TTELFQAGDVCGISSRKKAVEAKCSLACEYLSEEDY) are Vesicular-facing. The helical transmembrane segment at 374–394 (MDLLWTTLSEFPGVLVTLWII) threads the bilayer. Over 395-401 (DRLGRKK) the chain is Cytoplasmic. Residues 402–422 (TMALCFVIFSFCSLLLFICVG) traverse the membrane as a helical segment. The Vesicular segment spans residues 423–424 (RN). Residues 425–445 (VLTLLLFIARAFISGGFQAAY) form a helical membrane-spanning segment. The Cytoplasmic portion of the chain corresponds to 446–457 (VYTPEVYPTATR). The chain crosses the membrane as a helical span at residues 458–478 (ALGLGTCSGMARVGALITPFI). Residues 479–489 (AQVMLESSVYL) are Vesicular-facing. A helical transmembrane segment spans residues 490–510 (TLAVYSGCCLLAALASCFLPI). Topologically, residues 511–548 (ETKGRGLQESSHREWGQEMVGRGMHGADVTRSNSGSQE) are cytoplasmic. Residue S542 is modified to Phosphoserine.

Belongs to the major facilitator superfamily.

It localises to the cytoplasmic vesicle. Its subcellular location is the secretory vesicle. The protein resides in the synaptic vesicle membrane. This is Synaptic vesicle 2-related protein (SVOP) from Pongo abelii (Sumatran orangutan).